Here is a 509-residue protein sequence, read N- to C-terminus: Subtelomeric hrmA-associated cluster protein AFUA_5G14880 (509 aa).

Part of the subtelomeric hrmA-associated cluster (HAC) containing genes that alter the hyphal surface (such as reduced total chitin or increased beta-glucan exposure) and perturb inter-hyphal interactions within the developing biofilms, resulting in a loss of vertically aligned polarized growing filaments. Consequently, this hypoxia-typic morphotype (called H-MORPH) with altered biofilm architecture leads to increased hypoxia fitness, increased host inflammation, rapid disease progression, and mortality in a murine model of invasive aspergillosis. The polypeptide is Subtelomeric hrmA-associated cluster protein AFUA_5G14880 (Aspergillus fumigatus (strain ATCC MYA-4609 / CBS 101355 / FGSC A1100 / Af293) (Neosartorya fumigata)).